The sequence spans 165 residues: Protein-export protein SecB (165 aa).

This sequence belongs to the SecB family. Homotetramer, a dimer of dimers. One homotetramer interacts with 1 SecA dimer.

Its subcellular location is the cytoplasm. Functionally, one of the proteins required for the normal export of preproteins out of the cell cytoplasm. It is a molecular chaperone that binds to a subset of precursor proteins, maintaining them in a translocation-competent state. It also specifically binds to its receptor SecA. The chain is Protein-export protein SecB from Marinobacter nauticus (strain ATCC 700491 / DSM 11845 / VT8) (Marinobacter aquaeolei).